Consider the following 906-residue polypeptide: Translation initiation factor IF-2 (906 aa).

Disordered regions lie at residues 134 to 250 (RQRN…GSHV) and 269 to 317 (HLSA…FERP). The segment covering 136 to 177 (RNLDEQQRLAESDRVRDEEIQRKRDEEQAAKDRAEAERKAAE) has biased composition (basic and acidic residues). Low complexity-rich tracts occupy residues 178–232 (EAAA…STPA) and 287–305 (GRPG…RGSN). The tr-type G domain maps to 405–574 (TRPPVVTIMG…SLQAEVLELK (170 aa)). The tract at residues 414–421 (GHVDHGKT) is G1. Residue 414 to 421 (GHVDHGKT) coordinates GTP. A G2 region spans residues 439 to 443 (GITQH). The G3 stretch occupies residues 460–463 (DTPG). Residues 460 to 464 (DTPGH) and 514 to 517 (NKID) each bind GTP. Positions 514–517 (NKID) are G4. A G5 region spans residues 550–552 (SAK).

This sequence belongs to the TRAFAC class translation factor GTPase superfamily. Classic translation factor GTPase family. IF-2 subfamily.

The protein localises to the cytoplasm. In terms of biological role, one of the essential components for the initiation of protein synthesis. Protects formylmethionyl-tRNA from spontaneous hydrolysis and promotes its binding to the 30S ribosomal subunits. Also involved in the hydrolysis of GTP during the formation of the 70S ribosomal complex. The sequence is that of Translation initiation factor IF-2 from Xanthomonas oryzae pv. oryzae (strain MAFF 311018).